Reading from the N-terminus, the 174-residue chain is Acetolactate synthase small subunit (174 aa).

The ACT domain occupies threonine 4–asparagine 78.

Belongs to the acetolactate synthase small subunit family. In terms of assembly, dimer of large and small chains.

The protein localises to the plastid. It localises to the chloroplast. The catalysed reaction is 2 pyruvate + H(+) = (2S)-2-acetolactate + CO2. Its pathway is amino-acid biosynthesis; L-isoleucine biosynthesis; L-isoleucine from 2-oxobutanoate: step 1/4. It participates in amino-acid biosynthesis; L-valine biosynthesis; L-valine from pyruvate: step 1/4. The polypeptide is Acetolactate synthase small subunit (ilvH) (Porphyra purpurea (Red seaweed)).